Reading from the N-terminus, the 289-residue chain is Urease accessory protein UreD (289 aa).

This sequence belongs to the UreD family. UreD, UreF and UreG form a complex that acts as a GTP-hydrolysis-dependent molecular chaperone, activating the urease apoprotein by helping to assemble the nickel containing metallocenter of UreC. The UreE protein probably delivers the nickel.

Its subcellular location is the cytoplasm. In terms of biological role, required for maturation of urease via the functional incorporation of the urease nickel metallocenter. The polypeptide is Urease accessory protein UreD (Magnetococcus marinus (strain ATCC BAA-1437 / JCM 17883 / MC-1)).